Reading from the N-terminus, the 911-residue chain is Androgen receptor (911 aa).

A modulating region spans residues 1–549 (MEVQLGLGRV…PIDYYFPPQK (549 aa)). The tract at residues 1–578 (MEVQLGLGRV…GSCKVFFKRA (578 aa)) is interaction with ZNF318. 2 disordered regions span residues 35-164 (QNPG…LSLL) and 192-225 (QQQQ…YLGG). Over residues 44-88 (AASAAPPGASLLLQQQQQQQQQQQQQQQQQQQQQQETSPRQQQQQ) the composition is skewed to low complexity. Ser81 is modified (phosphoserine; by CDK9). At Ser93 the chain carries Phosphoserine. Low complexity predominate over residues 192 to 214 (QQQQQEAVSEGSSSGRAREASGA). Polar residues predominate over residues 215–225 (PTSSKDNYLGG). The residue at position 222 (Tyr222) is a Phosphotyrosine; by CSK. Ser255 bears the Phosphoserine mark. At Tyr266 the chain carries Phosphotyrosine; by CSK and TNK2. A phosphotyrosine; by CSK mark is found at Tyr306, Tyr345, Tyr356, and Tyr361. Tyr362 bears the Phosphotyrosine; by CSK and TNK2 mark. A Glycyl lysine isopeptide (Lys-Gly) (interchain with G-Cter in SUMO) cross-link involves residue Lys385. At Tyr392 the chain carries Phosphotyrosine; by CSK. Lys512 is covalently cross-linked (Glycyl lysine isopeptide (Lys-Gly) (interchain with G-Cter in SUMO)). A phosphotyrosine; by CSK mark is found at Tyr526 and Tyr543. Positions 543-910 (YYFPPQKTCL…GKVKPIYFHT (368 aa)) are interaction with LPXN. 2 consecutive NR C4-type zinc fingers follow at residues 551–571 (CLIC…CGSC) and 587–611 (CASR…LRKC). Residues 551 to 623 (CLICGDEASG…AGMTLGARKL (73 aa)) constitute a DNA-binding region (nuclear receptor). The interaction with HIPK3 stretch occupies residues 563-653 (YGALTCGSCK…TEETTQKLTV (91 aa)). An interaction with CCAR1 region spans residues 583 to 910 (QKYLCASRND…GKVKPIYFHT (328 aa)). The interval 616-910 (MTLGARKLKK…GKVKPIYFHT (295 aa)) is interaction with KAT7. Residue Ser642 is modified to Phosphoserine; by STK4/MST1. One can recognise an NR LBD domain in the interval 660–891 (ECQPIFLNVL…DFPEMMAEII (232 aa)). The 17beta-hydroxy-5alpha-androstan-3-one site is built by Asn697 and Arg744. Glycyl lysine isopeptide (Lys-Gly) (interchain with G-Cter in ubiquitin) cross-links involve residues Lys837 and Lys839. Residue Thr869 coordinates 17beta-hydroxy-5alpha-androstan-3-one. Tyr907 is subject to Phosphotyrosine; by CSK.

It belongs to the nuclear hormone receptor family. NR3 subfamily. As to quaternary structure, binds DNA as a homodimer. Part of a ternary complex containing AR, EFCAB6/DJBP and PARK7. Interacts with HIPK3 and NR0B2 in the presence of androgen. The ligand binding domain interacts with KAT7/HBO1 in the presence of dihydrotestosterone. Interacts with EFCAB6/DJBP, PQBP1, RANBP9, RBAK, SPDEF, SRA1, TGFB1I1 and RREB1. Interacts with ZMIZ1/ZIMP10 and ZMIZ2/ZMIP7 which both enhance its transactivation activity. Interacts with SLC30A9 and RAD54L2/ARIP4. Interacts with MACROD1 (via macro domain). Interacts via the ligand-binding domain with LXXLL and FXXLF motifs from NCOA1, NCOA2, NCOA3 and MAGEA11. Interacts (via nuclear receptor DNA binding domain and nuclear receptor ligand binding domain) with NCOA4. The AR N-terminal poly-Gln region binds Ran resulting in enhancement of AR-mediated transactivation. Ran-binding decreases as the poly-Gln length increases. Interacts with HIP1 (via coiled coil domain). Interacts (via ligand-binding domain) with TRIM68. Interacts with TNK2. Interacts with USP26. Interacts with RNF6. Interacts (regulated by RNF6 probably through polyubiquitination) with RNF14; regulates AR transcriptional activity. Interacts with PRMT2 and TRIM24. Interacts with RACK1. Interacts with RANBP10; this interaction enhances dihydrotestosterone-induced AR transcriptional activity. Interacts with PRPF6 in a hormone-independent way; this interaction enhances dihydrotestosterone-induced AR transcriptional activity. Interacts with STK4/MST1. Interacts with ZIPK/DAPK3. Interacts with LPXN. Interacts with MAK. Part of a complex containing AR, MAK and NCOA3. Interacts with CRY1. Interacts with CCAR1 and GATA2. Interacts with ZNF318. Interacts with BUD31. Interacts with ARID4A. Interacts with ARID4B. Interacts (via NR LBD domain) with ZBTB7A; the interaction is direct and androgen-dependent. Interacts with NCOR1. Interacts with NCOR2. Interacts with CRY2 in a ligand-dependent manner. Post-translationally, phosphorylated in prostate cancer cells in response to several growth factors including EGF. Phosphorylation is induced by c-Src kinase (CSK). Tyr-526 is one of the major phosphorylation sites and an increase in phosphorylation and Src kinase activity is associated with prostate cancer progression. Phosphorylation by TNK2 enhances the DNA-binding and transcriptional activity. Phosphorylation at Ser-81 by CDK9 regulates AR promoter selectivity and cell growth. Sumoylated on Lys-385 (major) and Lys-512. Ubiquitinated. Deubiquitinated by USP26. 'Lys-6' and 'Lys-27'-linked polyubiquitination by RNF6 modulates AR transcriptional activity and specificity. In terms of processing, palmitoylated by ZDHHC7 and ZDHHC21. Palmitoylation is required for plasma membrane targeting and for rapid intracellular signaling via ERK and AKT kinases and cAMP generation.

The protein localises to the nucleus. It localises to the cytoplasm. Its function is as follows. Steroid hormone receptors are ligand-activated transcription factors that regulate eukaryotic gene expression and affect cellular proliferation and differentiation in target tissues. Transcription factor activity is modulated by bound coactivator and corepressor proteins like ZBTB7A that recruits NCOR1 and NCOR2 to the androgen response elements/ARE on target genes, negatively regulating androgen receptor signaling and androgen-induced cell proliferation. Transcription activation is also down-regulated by NR0B2. Activated, but not phosphorylated, by HIPK3 and ZIPK/DAPK3. The polypeptide is Androgen receptor (AR) (Pan troglodytes (Chimpanzee)).